We begin with the raw amino-acid sequence, 207 residues long: MIAIVDYNMGNLASVQNAFAKIGTQTVIEGDPKKFKEYDKLILPGVGAFGDAMEHLRERGMIEAIKEFAASTKPILGICLGMQLLFESSEEFGEHEGLGLIKGKVVAFDTSKFEETLKVPHMGWNRMFTKEHPLFEGLDEEHYLYFVHSYHALCDDEKDSIGRTFYGYEFTSAVAHDNIMGIQPHPEKSHDNGLKILENFTKYRNLK.

One can recognise a Glutamine amidotransferase type-1 domain in the interval 1-207; the sequence is MIAIVDYNMG…ENFTKYRNLK (207 aa). Cysteine 79 acts as the Nucleophile in catalysis. Residues histidine 185 and glutamate 187 contribute to the active site.

Heterodimer of HisH and HisF.

The protein localises to the cytoplasm. The enzyme catalyses 5-[(5-phospho-1-deoxy-D-ribulos-1-ylimino)methylamino]-1-(5-phospho-beta-D-ribosyl)imidazole-4-carboxamide + L-glutamine = D-erythro-1-(imidazol-4-yl)glycerol 3-phosphate + 5-amino-1-(5-phospho-beta-D-ribosyl)imidazole-4-carboxamide + L-glutamate + H(+). It carries out the reaction L-glutamine + H2O = L-glutamate + NH4(+). The protein operates within amino-acid biosynthesis; L-histidine biosynthesis; L-histidine from 5-phospho-alpha-D-ribose 1-diphosphate: step 5/9. Its function is as follows. IGPS catalyzes the conversion of PRFAR and glutamine to IGP, AICAR and glutamate. The HisH subunit catalyzes the hydrolysis of glutamine to glutamate and ammonia as part of the synthesis of IGP and AICAR. The resulting ammonia molecule is channeled to the active site of HisF. In Sulfurimonas denitrificans (strain ATCC 33889 / DSM 1251) (Thiomicrospira denitrificans (strain ATCC 33889 / DSM 1251)), this protein is Imidazole glycerol phosphate synthase subunit HisH.